Consider the following 345-residue polypeptide: Phosphoribosylformylglycinamidine cyclo-ligase (345 aa).

It belongs to the AIR synthase family.

It localises to the cytoplasm. The enzyme catalyses 2-formamido-N(1)-(5-O-phospho-beta-D-ribosyl)acetamidine + ATP = 5-amino-1-(5-phospho-beta-D-ribosyl)imidazole + ADP + phosphate + H(+). The protein operates within purine metabolism; IMP biosynthesis via de novo pathway; 5-amino-1-(5-phospho-D-ribosyl)imidazole from N(2)-formyl-N(1)-(5-phospho-D-ribosyl)glycinamide: step 2/2. The chain is Phosphoribosylformylglycinamidine cyclo-ligase from Bifidobacterium longum (strain DJO10A).